The sequence spans 215 residues: Cytochrome b6 (215 aa).

A helical transmembrane segment spans residues Ile-32–Phe-52. Cys-35 contributes to the heme c binding site. Residues His-86 and His-100 each contribute to the heme b site. The next 3 helical transmembrane spans lie at Ala-90 to Phe-110, Leu-116 to Tyr-136, and Leu-186 to Ile-206. His-187 and His-202 together coordinate heme b.

It belongs to the cytochrome b family. PetB subfamily. In terms of assembly, the 4 large subunits of the cytochrome b6-f complex are cytochrome b6, subunit IV (17 kDa polypeptide, PetD), cytochrome f and the Rieske protein, while the 4 small subunits are PetG, PetL, PetM and PetN. The complex functions as a dimer. Heme b is required as a cofactor. It depends on heme c as a cofactor.

The protein resides in the plastid. It is found in the chloroplast thylakoid membrane. Functionally, component of the cytochrome b6-f complex, which mediates electron transfer between photosystem II (PSII) and photosystem I (PSI), cyclic electron flow around PSI, and state transitions. The protein is Cytochrome b6 of Gossypium barbadense (Sea Island cotton).